A 138-amino-acid polypeptide reads, in one-letter code: Basic phospholipase A2 BP-I (138 aa).

The first 16 residues, 1-16 (MRTLWIMAVLLLGVDG), serve as a signal peptide directing secretion. Cystine bridges form between C42-C132, C44-C60, C59-C112, C65-C138, C66-C105, C73-C98, and C91-C103. Ca(2+) is bound by residues G45 and G47. The active site involves H63. D106 is a catalytic residue.

It belongs to the phospholipase A2 family. Group II subfamily. K49 sub-subfamily. The cofactor is Ca(2+). Expressed by the venom gland.

Its subcellular location is the secreted. The catalysed reaction is a 1,2-diacyl-sn-glycero-3-phosphocholine + H2O = a 1-acyl-sn-glycero-3-phosphocholine + a fatty acid + H(+). Snake venom phospholipase A2 (PLA2) that has strong myotoxic activity with a low phospholipase A2 activity. PLA2 catalyzes the calcium-dependent hydrolysis of the 2-acyl groups in 3-sn-phosphoglycerides. This Protobothrops flavoviridis (Habu) protein is Basic phospholipase A2 BP-I.